A 462-amino-acid chain; its full sequence is L-seryl-tRNA(Sec) selenium transferase (462 aa).

The residue at position 295 (K295) is an N6-(pyridoxal phosphate)lysine.

It belongs to the SelA family. In terms of assembly, homodecamer; pentamer of dimers. Binds only one seryl-tRNA(Sec) per dimer. Pyridoxal 5'-phosphate is required as a cofactor.

It localises to the cytoplasm. It catalyses the reaction L-seryl-tRNA(Sec) + selenophosphate + H(+) = L-selenocysteinyl-tRNA(Sec) + phosphate. It participates in aminoacyl-tRNA biosynthesis; selenocysteinyl-tRNA(Sec) biosynthesis; selenocysteinyl-tRNA(Sec) from L-seryl-tRNA(Sec) (bacterial route): step 1/1. Functionally, converts seryl-tRNA(Sec) to selenocysteinyl-tRNA(Sec) required for selenoprotein biosynthesis. This Klebsiella pneumoniae (strain 342) protein is L-seryl-tRNA(Sec) selenium transferase.